Here is a 772-residue protein sequence, read N- to C-terminus: 5-methyltetrahydropteroyltriglutamate--homocysteine methyltransferase (772 aa).

5-methyltetrahydropteroyltri-L-glutamate contacts are provided by residues 24 to 27 and lysine 120; that span reads RELK. Residues 446–448 and glutamate 499 contribute to the L-homocysteine site; that span reads IGS. L-methionine contacts are provided by residues 446 to 448 and glutamate 499; that span reads IGS. Tryptophan 576 serves as a coordination point for 5-methyltetrahydropteroyltri-L-glutamate. L-homocysteine is bound at residue aspartate 614. Residue aspartate 614 coordinates L-methionine. Residue glutamate 620 participates in 5-methyltetrahydropteroyltri-L-glutamate binding. Residues histidine 656, cysteine 658, and glutamate 680 each contribute to the Zn(2+) site. Histidine 709 (proton donor) is an active-site residue. Cysteine 741 is a binding site for Zn(2+).

This sequence belongs to the vitamin-B12 independent methionine synthase family. The cofactor is Zn(2+).

The enzyme catalyses 5-methyltetrahydropteroyltri-L-glutamate + L-homocysteine = tetrahydropteroyltri-L-glutamate + L-methionine. Its pathway is amino-acid biosynthesis; L-methionine biosynthesis via de novo pathway; L-methionine from L-homocysteine (MetE route): step 1/1. Catalyzes the transfer of a methyl group from 5-methyltetrahydrofolate to homocysteine resulting in methionine formation. This is 5-methyltetrahydropteroyltriglutamate--homocysteine methyltransferase from Streptomyces coelicolor (strain ATCC BAA-471 / A3(2) / M145).